The following is a 522-amino-acid chain: Protein disulfide-isomerase (522 aa).

A signal peptide (or 22) is located at residues 1 to 28 (MKFSAGAVLSWSSLLLASSVFAQQEAVA). In terms of domain architecture, Thioredoxin 1 spans 29-141 (PEDSAVVKLA…VQFMIKQSQP (113 aa)). Catalysis depends on nucleophile residues Cys61 and Cys64. An intrachain disulfide couples Cys61 to Cys64. N-linked (GlcNAc...) asparagine glycosylation is found at Asn82, Asn117, Asn155, and Asn174. In terms of domain architecture, Thioredoxin 2 spans 356-485 (FLKGDASPIV…LFDFIKENGH (130 aa)). Catalysis depends on nucleophile residues Cys406 and Cys409. Cys406 and Cys409 form a disulfide bridge. An N-linked (GlcNAc...) asparagine glycan is attached at Asn425. The tract at residues 497–522 (AQEKAAEEADADAELADEEDAIHDEL) is disordered. The segment covering 504–522 (EADADAELADEEDAIHDEL) has biased composition (acidic residues). The Prevents secretion from ER signature appears at 519–522 (HDEL).

The protein belongs to the protein disulfide isomerase family. Interacts with EPS1, KAR2 and MNL1. The N-terminus is blocked.

Its subcellular location is the endoplasmic reticulum lumen. The enzyme catalyses Catalyzes the rearrangement of -S-S- bonds in proteins.. Its function is as follows. Protein disulfide isomerase of ER lumen required for formation of disulfide bonds in secretory and cell-surface proteins and which unscrambles non-native disulfide bonds. Forms a complex with MNL1 to process unfolded protein-bound Man8GlcNAc2 oligosaccharides to Man7GlcNAc2, promoting degradation in unfolded protein response. This is Protein disulfide-isomerase (PDI1) from Saccharomyces cerevisiae (strain ATCC 204508 / S288c) (Baker's yeast).